Consider the following 480-residue polypeptide: CASP8 and FADD-like apoptosis regulator (480 aa).

2 DED domains span residues 1–73 (MSAE…RILK) and 92–170 (DYRV…KIQK). The tract at residues 1 to 195 (MSAEVIHQVE…LQAAIQKSFK (195 aa)) is interaction with CASP8. The tract at residues 1–227 (MSAEVIHQVE…GTQQEPVKKS (227 aa)) is interaction with FADD. An interaction with CASP8 propeptide region spans residues 1–305 (MSAEVIHQVE…FACMPEHRDY (305 aa)). The interval 1 to 435 (MSAEVIHQVE…CLSQKLRQER (435 aa)) is not proteolytically processed and involved in apoptosis inhibition. The segment at 192–435 (KSFKDPSNNF…CLSQKLRQER (244 aa)) is interaction with CASP3. The interaction with TRAF1 and TRAF2 stretch occupies residues 192–480 (KSFKDPSNNF…LRKKLIPSYT (289 aa)). Residues 217–480 (LGTQQEPVKK…LRKKLIPSYT (264 aa)) form an interaction with CASP8 subunits p18 and p10 region. The segment at 263-358 (ETELLRDTFT…AGKPKIFFIQ (96 aa)) is caspase. The tract at residues 370 to 480 (SSLLEVDGPA…LRKKLIPSYT (111 aa)) is interaction with CASP8.

The protein belongs to the peptidase C14A family. TNFRSF6 stimulation triggers recruitment to the death-inducing signaling complex (DISC) formed by TNFRSF6, FADD and CASP8. A proteolytic fragment (p43) stays associated with the DISC. Interacts with RIPK1. Post-translationally, proteolytically processed by CASP8 generating subunit p43 and p12.

Apoptosis regulator protein which may function as a crucial link between cell survival and cell death pathways in mammalian cells. Acts as an inhibitor of TNFRSF6 mediated apoptosis. A proteolytic fragment (p43) is likely retained in the death-inducing signaling complex (DISC) thereby blocking further recruitment and processing of caspase-8 at the complex. Full length and shorter isoforms have been shown either to induce apoptosis or to reduce TNFRSF-triggered apoptosis. Lacks enzymatic (caspase) activity. The sequence is that of CASP8 and FADD-like apoptosis regulator (CFLAR) from Pongo abelii (Sumatran orangutan).